Consider the following 202-residue polypeptide: Prohormone-4 (202 aa).

The signal sequence occupies residues 1–28 (MVQRLCTSVAALSLALSACVFFPRAVMA). Residues 46–86 (ACRPYEPFKCPGDDTCISIQYLCDGAPDCQDGYDEDSRLCT) form the LDL-receptor class A domain. Cystine bridges form between cysteine 47–cysteine 61, cysteine 55–cysteine 74, and cysteine 68–cysteine 85.

Its subcellular location is the secreted. This Apis mellifera (Honeybee) protein is Prohormone-4.